Consider the following 956-residue polypeptide: Dual specificity protein kinase YAK1 homolog (956 aa).

The 343-residue stretch at 122-464 (YIVKDLLGHG…PFQAAKHPFI (343 aa)) folds into the Protein kinase domain. ATP-binding positions include 128-136 (LGHGTFGQV) and K151. S222 is subject to Phosphoserine. D249 (proton acceptor) is an active-site residue. Disordered stretches follow at residues 620–657 (LGTSPSQFTPNTNNQFLAGSPGHHGPTSPVRNSCHGSP), 672–781 (SAGY…NYSD), and 806–956 (GSTD…GSIA). Positions 622–636 (TSPSQFTPNTNNQFL) are enriched in polar residues. Low complexity predominate over residues 672-691 (SAGYSGGSQSQDSSLSQAQG). Composition is skewed to polar residues over residues 697–713 (FYQNEGYSGQFSGSPSR), 725–757 (QTQGGTTLSTGYSTHNNANSSLRSNMYNPSSTA), and 806–817 (GSTDASSYSRRF). Residues 818–830 (NSNASTSSSNPTT) are compositionally biased toward low complexity. Composition is skewed to polar residues over residues 838–849 (QAFSQVETGSPP), 870–884 (VSQNSPSRLGQQPPQ), and 902–912 (MNAQLPPSNTN). Low complexity predominate over residues 913-924 (SGGQQRSPRSSS). The segment covering 937 to 947 (NHVPNVPSTSH) has biased composition (polar residues).

The protein belongs to the protein kinase superfamily. Ser/Thr protein kinase family. In terms of processing, autophosphorylated at Ser-222.

It carries out the reaction L-seryl-[protein] + ATP = O-phospho-L-seryl-[protein] + ADP + H(+). The enzyme catalyses L-threonyl-[protein] + ATP = O-phospho-L-threonyl-[protein] + ADP + H(+). The catalysed reaction is L-tyrosyl-[protein] + ATP = O-phospho-L-tyrosyl-[protein] + ADP + H(+). Functionally, dual specificity protein kinase that phosphorylates ANN1, ANN2 and CP29B at serine and threonine residues, and ANN1, ANN2 and ANN4 at tyrosine residues. May regulate the phosphorylation status of annexin proteins. Acts as a positive regulator in abscisic acid (ABA)-mediated regulation of postgermination growth and drought response. May regulate the expression of ABA-responsive genes such as RD22, RD29A, LTI65/RD29B and RAB18. The chain is Dual specificity protein kinase YAK1 homolog from Arabidopsis thaliana (Mouse-ear cress).